The following is a 115-amino-acid chain: Virulence-associated protein A' (115 aa).

The 55-residue stretch at 16–70 folds into the HTH cro/C1-type domain; it reads IKSDLDGLGINITEAAKALDVTRAALSEIINGKRGISAKMAWKLSKAFTNSDPEF. Positions 27-46 form a DNA-binding region, H-T-H motif; the sequence is ITEAAKALDVTRAALSEIIN.

Belongs to the VapA/VapI family.

The chain is Virulence-associated protein A' (vapA') from Dichelobacter nodosus (Bacteroides nodosus).